The sequence spans 136 residues: Histone H3.3 (136 aa).

The segment at 1 to 42 (MARTKQTARKSTGGKAPRKQLASKAARKSAPVSGGVKKPHRY) is disordered. K5 bears the N6,N6,N6-trimethyllysine; alternate mark. K5 is modified (N6,N6-dimethyllysine; alternate). N6-methyllysine; alternate occurs at positions 5 and 10. The residue at position 10 (K10) is an N6-acetyllysine; alternate. At S11 the chain carries Phosphoserine. K15 carries the post-translational modification N6,N6-dimethyllysine; alternate. N6-acetyllysine; alternate is present on residues K15, K19, K24, K28, and K37. An N6-methyllysine; alternate mark is found at K19, K24, K28, and K37. An N6,N6,N6-trimethyllysine; alternate mark is found at K28 and K37. Residues K28 and K37 each carry the N6,N6-dimethyllysine; alternate modification. Residues K57 and K65 each carry the N6-acetyllysine modification. Residue K80 is modified to N6,N6,N6-trimethyllysine; alternate. At K80 the chain carries N6,N6-dimethyllysine; alternate. N6-methyllysine; alternate is present on K80.

Belongs to the histone H3 family. In terms of assembly, the nucleosome is a histone octamer containing two molecules each of H2A, H2B, H3 and H4 assembled in one H3-H4 heterotetramer and two H2A-H2B heterodimers. The octamer wraps approximately 147 bp of DNA. In terms of processing, phosphorylated by IPL1 to form H3S10ph. H3S10ph promotes subsequent H3K14ac formation and is required for transcriptional activation through TBP recruitment to the promoters. Post-translationally, mono-, di- and trimethylated by the COMPASS complex to form H3K4me1/2/3. H3K4me activates gene expression by regulating transcription elongation and plays a role in telomere length maintenance. H3K4me enrichment correlates with transcription levels, and occurs in a 5' to 3' gradient with H3K4me3 enrichment at the 5'-end of genes, shifting to H3K4me2 and then H3K4me1. Methylated by SET2 to form H3K36me. H3K36me represses gene expression. Methylated by DOT1 to form H3K79me. H3K79me is required for association of SIR proteins with telomeric regions and for telomeric silencing. The COMPASS-mediated formation of H3K4me2/3 and the DOT1-mediated formation of H3K79me require H2BK123ub1. Acetylation of histone H3 leads to transcriptional activation. H3K14ac formation by GCN5 is promoted by H3S10ph. H3K14ac can also be formed by ESA1. H3K56ac formation occurs predominantly in newly synthesized H3 molecules during G1, S and G2/M of the cell cycle and may be involved in DNA repair.

Its subcellular location is the nucleus. The protein resides in the chromosome. Core component of nucleosome. Nucleosomes wrap and compact DNA into chromatin, limiting DNA accessibility to the cellular machineries which require DNA as a template. Histones thereby play a central role in transcription regulation, DNA repair, DNA replication and chromosomal stability. DNA accessibility is regulated via a complex set of post-translational modifications of histones, also called histone code, and nucleosome remodeling. The polypeptide is Histone H3.3 (HHT3) (Candida albicans (strain SC5314 / ATCC MYA-2876) (Yeast)).